Reading from the N-terminus, the 76-residue chain is uncharacterized protein (76 aa).

3 helical membrane passes run 1-21, 35-55, and 56-76; these read MTAIIVYSCLTMCVIYFHLQL, CFDIFLLLIEMLKLIFYLLII, and NNKFYIFIIISIALITINTMI.

It is found in the cell membrane. This is an uncharacterized protein from Borreliella burgdorferi (strain ATCC 35210 / DSM 4680 / CIP 102532 / B31) (Borrelia burgdorferi).